A 614-amino-acid polypeptide reads, in one-letter code: Glucose oxidase 1 (614 aa).

An N-terminal signal peptide occupies residues 1–15; that stretch reads MKSIILSCFVISAAA. Residues Leu52, Thr53, and Glu73 each contribute to the FAD site. A glycan (N-linked (GlcNAc...) asparagine) is linked at Asn112. The interval 117 to 136 is disordered; it reads IRSGNGLGGSTLTNGGSWTR. Ser126, Asn130, Gly131, and Ser133 together coordinate FAD. N-linked (GlcNAc...) asparagine glycans are attached at residues Asn184 and Asn191. A disulfide bridge links Cys187 with Cys229. An FAD-binding site is contributed by Val273. Residues Asn279, Asn383, and Asn416 are each glycosylated (N-linked (GlcNAc...) asparagine). His544 acts as the Proton acceptor in catalysis. O2 contacts are provided by Arg565 and Val566. The FAD site is built by Gly577 and Met589.

The protein belongs to the GMC oxidoreductase family. In terms of assembly, homodimer. It depends on FAD as a cofactor.

It localises to the secreted. Its subcellular location is the cell wall. The protein localises to the cytoplasm. It is found in the extracellular space. The protein resides in the extracellular matrix. It catalyses the reaction beta-D-glucose + O2 = D-glucono-1,5-lactone + H2O2. Glucose oxidase catalyzes the oxidation of beta-D-glucose to D-glucono-delta-lactone and hydrogen peroxide in the presence of molecular oxygen. This is Glucose oxidase 1 from Penicillium expansum (Blue mold rot fungus).